We begin with the raw amino-acid sequence, 395 residues long: 8-amino-7-oxononanoate synthase (395 aa).

Arg24 contributes to the substrate binding site. Residue 111-112 (GF) participates in pyridoxal 5'-phosphate binding. Position 136 (His136) interacts with substrate. Residues Ser184, 209–212 (DDAH), and 240–243 (TLSK) each bind pyridoxal 5'-phosphate. At Lys243 the chain carries N6-(pyridoxal phosphate)lysine. Thr357 provides a ligand contact to substrate.

This sequence belongs to the class-II pyridoxal-phosphate-dependent aminotransferase family. BioF subfamily. As to quaternary structure, homodimer. Requires pyridoxal 5'-phosphate as cofactor.

The catalysed reaction is 6-carboxyhexanoyl-[ACP] + L-alanine + H(+) = (8S)-8-amino-7-oxononanoate + holo-[ACP] + CO2. The protein operates within cofactor biosynthesis; biotin biosynthesis. Its function is as follows. Catalyzes the decarboxylative condensation of pimeloyl-[acyl-carrier protein] and L-alanine to produce 8-amino-7-oxononanoate (AON), [acyl-carrier protein], and carbon dioxide. The polypeptide is 8-amino-7-oxononanoate synthase (Alkaliphilus metalliredigens (strain QYMF)).